We begin with the raw amino-acid sequence, 181 residues long: Adenylate kinase (181 aa).

ATP is bound at residue 10–15 (GAGKGT). The tract at residues 30–59 (STGDLFRYNISNGTELGLEAKKYLDAGDLV) is NMP. AMP-binding positions include Thr-31, Arg-36, 57–59 (DLV), 85–88 (GYPR), and Gln-92. Residues 126–132 (GRGRDDD) are LID. Arg-127 is a binding site for ATP. Residues Arg-129 and Arg-140 each coordinate AMP. Gly-166 lines the ATP pocket.

This sequence belongs to the adenylate kinase family. In terms of assembly, monomer.

It is found in the cytoplasm. It catalyses the reaction AMP + ATP = 2 ADP. Its pathway is purine metabolism; AMP biosynthesis via salvage pathway; AMP from ADP: step 1/1. In terms of biological role, catalyzes the reversible transfer of the terminal phosphate group between ATP and AMP. Plays an important role in cellular energy homeostasis and in adenine nucleotide metabolism. The polypeptide is Adenylate kinase (Mycolicibacterium vanbaalenii (strain DSM 7251 / JCM 13017 / BCRC 16820 / KCTC 9966 / NRRL B-24157 / PYR-1) (Mycobacterium vanbaalenii)).